Consider the following 642-residue polypeptide: Serotransferrin (642 aa).

Transferrin-like domains are found at residues 1 to 280 (GIKE…SLKK) and 290 to 621 (IKWC…SLRQ). Fe(3+) is bound by residues D25 and Y54. 3 cysteine pairs are disulfide-bonded: C77/C158, C121/C137, and C186/C200. Residues T79, K83, A85, and G86 each coordinate hydrogencarbonate. Y152 is a Fe(3+) binding site. Residue H208 participates in Fe(3+) binding. Intrachain disulfides connect C293/C329 and C303/C320. A Fe(3+)-binding site is contributed by D344. Disulfide bonds link C354-C633, C369-C594, C402-C480, C426-C622, C436-C450, C447-C463, and C520-C535. N365 carries an N-linked (GlcNAc...) asparagine glycan. Y379 contacts Fe(3+). The hydrogencarbonate site is built by T404, R408, A410, and G411. A Fe(3+)-binding site is contributed by Y474. H543 contributes to the Fe(3+) binding site.

The protein belongs to the transferrin family. In terms of assembly, monomer. As to expression, brain and liver; to a lesser extent in kidney and heart.

Its subcellular location is the secreted. Transferrins are iron binding transport proteins which can bind two Fe(3+) ions in association with the binding of an anion, usually bicarbonate. In Gadus morhua (Atlantic cod), this protein is Serotransferrin (tf).